The sequence spans 890 residues: Alanine--tRNA ligase (890 aa).

Residues H578, H582, C689, and H693 each coordinate Zn(2+).

The protein belongs to the class-II aminoacyl-tRNA synthetase family. Zn(2+) serves as cofactor.

Its subcellular location is the cytoplasm. It catalyses the reaction tRNA(Ala) + L-alanine + ATP = L-alanyl-tRNA(Ala) + AMP + diphosphate. In terms of biological role, catalyzes the attachment of alanine to tRNA(Ala) in a two-step reaction: alanine is first activated by ATP to form Ala-AMP and then transferred to the acceptor end of tRNA(Ala). Also edits incorrectly charged Ser-tRNA(Ala) and Gly-tRNA(Ala) via its editing domain. This is Alanine--tRNA ligase from Deinococcus radiodurans (strain ATCC 13939 / DSM 20539 / JCM 16871 / CCUG 27074 / LMG 4051 / NBRC 15346 / NCIMB 9279 / VKM B-1422 / R1).